A 180-amino-acid chain; its full sequence is Beta-lactoglobulin (180 aa).

The signal sequence occupies residues 1 to 18; sequence MKCLLLALGLALACGIQA. 3 disulfides stabilise this stretch: Cys-84–Cys-178, Cys-124–Cys-137, and Cys-124–Cys-139.

The protein belongs to the calycin superfamily. Lipocalin family. As to quaternary structure, under physiological conditions beta-lactoglobulin exists as an equilibrium mixture of monomeric and dimeric forms. Interaction with LMBR1L is controversial. Alternate disulfide bonds occur in equal amounts. In terms of tissue distribution, synthesized in mammary gland and secreted in milk.

Its subcellular location is the secreted. Its function is as follows. Primary component of whey, it binds retinol and is probably involved in the transport of that molecule. This chain is Beta-lactoglobulin (LGB), found in Capra hircus (Goat).